A 681-amino-acid polypeptide reads, in one-letter code: Chaperone protein HtpG (681 aa).

An a; substrate-binding region spans residues 1 to 326 (MQKGNIGVTT…SPDIPLNVSR (326 aa)). The interval 327-545 (SYLQSDSNVK…YMRRMKEMAN (219 aa)) is b. Positions 546–681 (IQAGMSFYGE…NFVKRSIELI (136 aa)) are c. The segment at 589-620 (IQTEMNSVSKRRNELKDSQKDKKEEDIPTAEK) is disordered. Residues 599–620 (RRNELKDSQKDKKEEDIPTAEK) show a composition bias toward basic and acidic residues.

This sequence belongs to the heat shock protein 90 family. As to quaternary structure, homodimer.

It localises to the cytoplasm. Its function is as follows. Molecular chaperone. Has ATPase activity. The polypeptide is Chaperone protein HtpG (Bacteroides thetaiotaomicron (strain ATCC 29148 / DSM 2079 / JCM 5827 / CCUG 10774 / NCTC 10582 / VPI-5482 / E50)).